Reading from the N-terminus, the 436-residue chain is GTPase Der (436 aa).

EngA-type G domains are found at residues 4-167 and 175-351; these read PTVA…PTEV and IRFS…ESQN. GTP contacts are provided by residues 10 to 17, 57 to 61, 119 to 122, 181 to 188, 229 to 233, and 294 to 297; these read GRPNVGKS, DTGGI, NKVD, DTAGM, and NKWD. The 85-residue stretch at 352–436 folds into the KH-like domain; the sequence is RRISSAVLND…PIHLIARKRK (85 aa).

The protein belongs to the TRAFAC class TrmE-Era-EngA-EngB-Septin-like GTPase superfamily. EngA (Der) GTPase family. As to quaternary structure, associates with the 50S ribosomal subunit.

GTPase that plays an essential role in the late steps of ribosome biogenesis. This Streptococcus thermophilus (strain CNRZ 1066) protein is GTPase Der.